The chain runs to 579 residues: Suppressor of cytokine signaling 7 (579 aa).

3 disordered regions span residues 1–25, 89–270, and 295–315; these read MVFRNVGRPPEEEDAEAAREPGPSE, PPPP…RTQS, and QRGLTSPHPPTPPPPPRRSLS. Pro residues-rich tracts occupy residues 89-99, 155-165, and 185-196; these read PPPPQPPPPAA, PPGPELPPVPF, and QPPPPPPPPGPL. The segment at 124 to 492 is mediates interaction with SORBS3; that stretch reads AESLETNSCS…GKFLYFLRSR (369 aa). Residues 206–217 are compositionally biased toward basic residues; it reads GSFKIRLSRLFR. Over residues 301–311 the composition is skewed to pro residues; it reads PHPPTPPPPPR. In terms of domain architecture, SH2 spans 398 to 507; sequence WYWGPMNWED…PTPVQLLYPV (110 aa). Residues 502-552 enclose the SOCS box domain; sequence QLLYPVSRFSNVKSLQHLCRFRIRQLVRIDHIPDLPLPKPLISYIRKFYYY.

In terms of assembly, substrate-recognition component of the ECS(SOCS7) complex, composed of SOCS7, CUL5, ELOB, ELOC and RNF7/RBX2. Interacts, via the third proline-rich region, with the second SH3 domain of the adapter protein NCK1. Also interacts with GRB2, INSR, PLCG1, SORBS3/vinexin, and phosphorylated STAT3 and STAT5. Interacts with SEPT6. Interacts with phosphorylated IRS4 and PIK3R1. Widely expressed with higher expression in brain and testis where it is expressed by spermatocytes and early spermatids. Also significantly expressed in spleen, skeletal muscle and kidney.

The protein resides in the cytoplasm. It localises to the nucleus. The protein localises to the cell membrane. The protein operates within protein modification; protein ubiquitination. Functionally, substrate-recognition component of a cullin-5-RING E3 ubiquitin-protein ligase complex (ECS complex, also named CRL5 complex), which mediates the ubiquitination and subsequent proteasomal degradation of target proteins, such as DAB1 and IRS1. Specifically recognizes and binds phosphorylated proteins via its SH2 domain, promoting their ubiquitination. The ECS(SOCS7) complex acts as a key regulator of reelin signaling by mediating ubiquitination and degradation of phosphorylated DAB1 in the cortical plate of the developing cerebral cortex, thereby regulating neuron positioning during cortex development. Functions in insulin signaling and glucose homeostasis through IRS1 ubiquitination and subsequent proteasomal degradation. Also inhibits prolactin, growth hormone and leptin signaling by preventing STAT3 and STAT5 activation, sequestering them in the cytoplasm and reducing their binding to DNA. This is Suppressor of cytokine signaling 7 from Mus musculus (Mouse).